Here is a 224-residue protein sequence, read N- to C-terminus: MQFPAFYVTGTDTGIGKTVASTALLHAVRARGHTAVGMKPVASGCVATPQGWHNEDALALQAASQPQPDYATLNPYALPAALAPELAAADVGVSLSLVPLQLAFAQLRAQAEVVVVEGVGGWAAPLSAQLDQADLVRALQLPVVLVVGVRLGCINHARLTAAAIAADGLRCIGWIANEIDPQMERIEDNIRMLGQRLAMPCWGRIPWRPNAQAEALAQHIRLPQ.

Residue 14–19 (GIGKTV) participates in ATP binding. Mg(2+) is bound at residue Thr-18. Lys-39 is a catalytic residue. Ser-43 contributes to the substrate binding site. Residues Asp-56, 117-120 (EGVG), and 177-178 (NE) each bind ATP. Asp-56 and Glu-117 together coordinate Mg(2+).

The protein belongs to the dethiobiotin synthetase family. Homodimer. It depends on Mg(2+) as a cofactor.

Its subcellular location is the cytoplasm. The catalysed reaction is (7R,8S)-7,8-diammoniononanoate + CO2 + ATP = (4R,5S)-dethiobiotin + ADP + phosphate + 3 H(+). It participates in cofactor biosynthesis; biotin biosynthesis; biotin from 7,8-diaminononanoate: step 1/2. In terms of biological role, catalyzes a mechanistically unusual reaction, the ATP-dependent insertion of CO2 between the N7 and N8 nitrogen atoms of 7,8-diaminopelargonic acid (DAPA, also called 7,8-diammoniononanoate) to form a ureido ring. The chain is ATP-dependent dethiobiotin synthetase BioD from Xanthomonas campestris pv. campestris (strain ATCC 33913 / DSM 3586 / NCPPB 528 / LMG 568 / P 25).